A 64-amino-acid polypeptide reads, in one-letter code: Conotoxin Pn-B01122 (64 aa).

The N-terminal stretch at methionine 1–alanine 22 is a signal peptide. A propeptide spanning residues arginine 23–asparagine 48 is cleaved from the precursor.

Belongs to the conotoxin T superfamily. Post-translationally, contains 2 disulfide bonds that can be either 'C1-C3, C2-C4' or 'C1-C4, C2-C3', since these disulfide connectivities have been observed for conotoxins with cysteine framework V (for examples, see AC P0DQQ7 and AC P81755). In terms of tissue distribution, expressed by the venom duct.

The protein resides in the secreted. This chain is Conotoxin Pn-B01122, found in Conus pennaceus (Feathered cone).